Consider the following 491-residue polypeptide: 2,3-bisphosphoglycerate-independent phosphoglycerate mutase (491 aa).

Residues aspartate 11 and serine 61 each coordinate Mn(2+). Residue serine 61 is the Phosphoserine intermediate of the active site. Substrate-binding positions include histidine 118, 147–148 (RD), arginine 177, arginine 183, 248–251 (RSDR), and lysine 320. Residues aspartate 386, histidine 390, aspartate 427, histidine 428, and histidine 445 each coordinate Mn(2+).

Belongs to the BPG-independent phosphoglycerate mutase family. In terms of assembly, monomer. Mn(2+) serves as cofactor.

It carries out the reaction (2R)-2-phosphoglycerate = (2R)-3-phosphoglycerate. Its pathway is carbohydrate degradation; glycolysis; pyruvate from D-glyceraldehyde 3-phosphate: step 3/5. Functionally, catalyzes the interconversion of 2-phosphoglycerate and 3-phosphoglycerate. In Sulfurimonas denitrificans (strain ATCC 33889 / DSM 1251) (Thiomicrospira denitrificans (strain ATCC 33889 / DSM 1251)), this protein is 2,3-bisphosphoglycerate-independent phosphoglycerate mutase.